We begin with the raw amino-acid sequence, 219 residues long: Uracil-DNA glycosylase (219 aa).

The active-site Proton acceptor is the D61.

This sequence belongs to the uracil-DNA glycosylase (UDG) superfamily. UNG family.

It localises to the cytoplasm. The enzyme catalyses Hydrolyzes single-stranded DNA or mismatched double-stranded DNA and polynucleotides, releasing free uracil.. Functionally, excises uracil residues from the DNA which can arise as a result of misincorporation of dUMP residues by DNA polymerase or due to deamination of cytosine. The sequence is that of Uracil-DNA glycosylase from Neisseria meningitidis serogroup C (strain 053442).